We begin with the raw amino-acid sequence, 175 residues long: Co-chaperone protein HscB homolog (175 aa).

Residues 7–79 form the J domain; the sequence is SHFDLFDLPA…LKRATYLLHL (73 aa).

It belongs to the HscB family. Interacts with HscA and stimulates its ATPase activity.

In terms of biological role, co-chaperone involved in the maturation of iron-sulfur cluster-containing proteins. Seems to help targeting proteins to be folded toward HscA. The sequence is that of Co-chaperone protein HscB homolog from Paraburkholderia phytofirmans (strain DSM 17436 / LMG 22146 / PsJN) (Burkholderia phytofirmans).